Here is a 181-residue protein sequence, read N- to C-terminus: Large ribosomal subunit protein uL10 (181 aa).

The protein belongs to the universal ribosomal protein uL10 family. As to quaternary structure, part of the ribosomal stalk of the 50S ribosomal subunit. The N-terminus interacts with L11 and the large rRNA to form the base of the stalk. The C-terminus forms an elongated spine to which L12 dimers bind in a sequential fashion forming a multimeric L10(L12)X complex.

Forms part of the ribosomal stalk, playing a central role in the interaction of the ribosome with GTP-bound translation factors. This chain is Large ribosomal subunit protein uL10, found in Acidobacterium capsulatum (strain ATCC 51196 / DSM 11244 / BCRC 80197 / JCM 7670 / NBRC 15755 / NCIMB 13165 / 161).